Here is a 147-residue protein sequence, read N- to C-terminus: Hemoglobin subunit beta (147 aa).

A Globin domain is found at 3–147 (EWTDDERAII…VVSALGRQYH (145 aa)). Positions 64 and 93 each coordinate heme b.

It belongs to the globin family. In terms of assembly, heterotetramer of two alpha chains and two beta chains. Red blood cells.

Functionally, involved in oxygen transport from gills to the various peripheral tissues. This is Hemoglobin subunit beta (hbb) from Melanogrammus aeglefinus (Haddock).